The following is a 133-amino-acid chain: Small ribosomal subunit protein eS8 (133 aa).

The segment at 1–31 (MGFYQGPDNRKITGGLKGKHRDKRKYEIGNP) is disordered.

Belongs to the eukaryotic ribosomal protein eS8 family. In terms of assembly, part of the 30S ribosomal subunit.

The chain is Small ribosomal subunit protein eS8 from Saccharolobus solfataricus (strain ATCC 35092 / DSM 1617 / JCM 11322 / P2) (Sulfolobus solfataricus).